Here is a 35-residue protein sequence, read N- to C-terminus: Photosystem II reaction center protein M (35 aa).

A helical transmembrane segment spans residues 5 to 25 (ILAFVATALFILIPTAFLLIL).

This sequence belongs to the PsbM family. PSII is composed of 1 copy each of membrane proteins PsbA, PsbB, PsbC, PsbD, PsbE, PsbF, PsbH, PsbI, PsbJ, PsbK, PsbL, PsbM, PsbT, PsbX, PsbY, PsbZ, Psb30/Ycf12, at least 3 peripheral proteins of the oxygen-evolving complex and a large number of cofactors. It forms dimeric complexes.

The protein resides in the plastid. It is found in the chloroplast thylakoid membrane. One of the components of the core complex of photosystem II (PSII). PSII is a light-driven water:plastoquinone oxidoreductase that uses light energy to abstract electrons from H(2)O, generating O(2) and a proton gradient subsequently used for ATP formation. It consists of a core antenna complex that captures photons, and an electron transfer chain that converts photonic excitation into a charge separation. This subunit is found at the monomer-monomer interface. This is Photosystem II reaction center protein M from Adiantum capillus-veneris (Maidenhair fern).